A 244-amino-acid chain; its full sequence is DNA repair protein RecO (244 aa).

Belongs to the RecO family.

Functionally, involved in DNA repair and RecF pathway recombination. This is DNA repair protein RecO from Nocardioides sp. (strain ATCC BAA-499 / JS614).